The primary structure comprises 92 residues: Small ribosomal subunit protein uS19 (92 aa).

Belongs to the universal ribosomal protein uS19 family.

Protein S19 forms a complex with S13 that binds strongly to the 16S ribosomal RNA. In Lactococcus lactis subsp. cremoris (strain MG1363), this protein is Small ribosomal subunit protein uS19.